Here is a 146-residue protein sequence, read N- to C-terminus: Protein E6 (146 aa).

2 zinc fingers span residues 27–63 and 100–136; these read CVFC…CAPC and CHAC…CCQC.

It belongs to the papillomaviridae E6 protein family. In terms of assembly, forms homodimers. Interacts with ubiquitin-protein ligase UBE3A/E6-AP; this interaction stimulates UBE3A ubiquitin activity. Interacts with host TP53 and EP300; this interaction inhibits TP53 activity.

The protein localises to the host cytoplasm. Its subcellular location is the host nucleus. Functionally, plays a major role in the induction and maintenance of cellular transformation. E6 associates with host UBE3A/E6-AP ubiquitin-protein ligase and modulates its activity. Sequesters tumor suppressor TP53 in the host cytoplasm and modulates its activity by interacting with host EP300 that results in the reduction of TP53 acetylation and activation. In turn, apoptosis induced by DNA damage is inhibited. E6 also protects host keratinocytes from apoptosis by mediating the degradation of host BAK1. May also inhibit host immune response. This is Protein E6 from Human papillomavirus type 61.